A 371-amino-acid chain; its full sequence is Putative glutamate--cysteine ligase 2 (371 aa).

Belongs to the glutamate--cysteine ligase type 2 family. YbdK subfamily.

The enzyme catalyses L-cysteine + L-glutamate + ATP = gamma-L-glutamyl-L-cysteine + ADP + phosphate + H(+). ATP-dependent carboxylate-amine ligase which exhibits weak glutamate--cysteine ligase activity. The sequence is that of Putative glutamate--cysteine ligase 2 from Nitrosospira multiformis (strain ATCC 25196 / NCIMB 11849 / C 71).